The sequence spans 377 residues: Putative glutamate--cysteine ligase 2 (377 aa).

Belongs to the glutamate--cysteine ligase type 2 family. YbdK subfamily.

The enzyme catalyses L-cysteine + L-glutamate + ATP = gamma-L-glutamyl-L-cysteine + ADP + phosphate + H(+). In terms of biological role, ATP-dependent carboxylate-amine ligase which exhibits weak glutamate--cysteine ligase activity. The chain is Putative glutamate--cysteine ligase 2 from Pseudomonas aeruginosa (strain LESB58).